The following is a 183-amino-acid chain: Apo-citrate lyase phosphoribosyl-dephospho-CoA transferase (183 aa).

This sequence belongs to the CitX family.

The catalysed reaction is apo-[citrate lyase ACP] + 2'-(5''-triphospho-alpha-D-ribosyl)-3'-dephospho-CoA = holo-[citrate lyase ACP] + diphosphate. Its function is as follows. Transfers 2-(5''-triphosphoribosyl)-3'-dephosphocoenzyme-A on a serine residue to the apo-acyl carrier protein (gamma chain) of the citrate lyase to yield holo-acyl carrier protein. The protein is Apo-citrate lyase phosphoribosyl-dephospho-CoA transferase of Escherichia coli O7:K1 (strain IAI39 / ExPEC).